A 383-amino-acid chain; its full sequence is Succinyl-diaminopimelate desuccinylase (383 aa).

H73 serves as a coordination point for Zn(2+). Residue D75 is part of the active site. D107 is a binding site for Zn(2+). The active-site Proton acceptor is E141. Positions 142, 170, and 356 each coordinate Zn(2+).

The protein belongs to the peptidase M20A family. DapE subfamily. As to quaternary structure, homodimer. Zn(2+) is required as a cofactor. Requires Co(2+) as cofactor.

It carries out the reaction N-succinyl-(2S,6S)-2,6-diaminopimelate + H2O = (2S,6S)-2,6-diaminopimelate + succinate. Its pathway is amino-acid biosynthesis; L-lysine biosynthesis via DAP pathway; LL-2,6-diaminopimelate from (S)-tetrahydrodipicolinate (succinylase route): step 3/3. Functionally, catalyzes the hydrolysis of N-succinyl-L,L-diaminopimelic acid (SDAP), forming succinate and LL-2,6-diaminopimelate (DAP), an intermediate involved in the bacterial biosynthesis of lysine and meso-diaminopimelic acid, an essential component of bacterial cell walls. The chain is Succinyl-diaminopimelate desuccinylase from Pseudomonas syringae pv. syringae (strain B728a).